Consider the following 774-residue polypeptide: 5-methyltetrahydropteroyltriglutamate--homocysteine methyltransferase (774 aa).

5-methyltetrahydropteroyltri-L-glutamate-binding positions include 24 to 27 and Lys-120; that span reads RELK. Residues 446–448 and Glu-499 each bind L-homocysteine; that span reads IGS. L-methionine contacts are provided by residues 446-448 and Glu-499; that span reads IGS. Trp-576 provides a ligand contact to 5-methyltetrahydropteroyltri-L-glutamate. Asp-614 serves as a coordination point for L-homocysteine. Residue Asp-614 participates in L-methionine binding. Residue Glu-620 participates in 5-methyltetrahydropteroyltri-L-glutamate binding. The Zn(2+) site is built by His-656, Cys-658, and Glu-680. The Proton donor role is filled by His-709. Cys-741 contributes to the Zn(2+) binding site.

Belongs to the vitamin-B12 independent methionine synthase family. Zn(2+) serves as cofactor.

The enzyme catalyses 5-methyltetrahydropteroyltri-L-glutamate + L-homocysteine = tetrahydropteroyltri-L-glutamate + L-methionine. Its pathway is amino-acid biosynthesis; L-methionine biosynthesis via de novo pathway; L-methionine from L-homocysteine (MetE route): step 1/1. Its function is as follows. Catalyzes the transfer of a methyl group from 5-methyltetrahydrofolate to homocysteine resulting in methionine formation. This chain is 5-methyltetrahydropteroyltriglutamate--homocysteine methyltransferase, found in Streptomyces griseus subsp. griseus (strain JCM 4626 / CBS 651.72 / NBRC 13350 / KCC S-0626 / ISP 5235).